The following is a 525-amino-acid chain: GMP synthase [glutamine-hydrolyzing] (525 aa).

A Glutamine amidotransferase type-1 domain is found at 9–207 (RILILDFGSQ…VLQLCACEKL (199 aa)). The Nucleophile role is filled by Cys86. Residues His181 and Glu183 contribute to the active site. The region spanning 208 to 400 (WTPANIVEDA…LGLPYDMVYR (193 aa)) is the GMPS ATP-PPase domain. 235–241 (SGGVDSS) contacts ATP.

In terms of assembly, homodimer.

The catalysed reaction is XMP + L-glutamine + ATP + H2O = GMP + L-glutamate + AMP + diphosphate + 2 H(+). The protein operates within purine metabolism; GMP biosynthesis; GMP from XMP (L-Gln route): step 1/1. Its function is as follows. Catalyzes the synthesis of GMP from XMP. The chain is GMP synthase [glutamine-hydrolyzing] from Cellvibrio japonicus (strain Ueda107) (Pseudomonas fluorescens subsp. cellulosa).